The primary structure comprises 376 residues: Chaperone protein DnaJ (376 aa).

The J domain occupies 5–70 (DYYEILGVSK…QKRAAYDQYG (66 aa)). The CR-type zinc finger occupies 131–209 (GVTKEIRIPT…CHGHGRVERS (79 aa)). Zn(2+)-binding residues include cysteine 144, cysteine 147, cysteine 161, cysteine 164, cysteine 183, cysteine 186, cysteine 197, and cysteine 200. 4 CXXCXGXG motif repeats span residues 144 to 151 (CDVCHGSG), 161 to 168 (CPTCHGSG), 183 to 190 (CPHCQGRG), and 197 to 204 (CNKCHGHG).

This sequence belongs to the DnaJ family. As to quaternary structure, homodimer. Zn(2+) serves as cofactor.

It localises to the cytoplasm. Its function is as follows. Participates actively in the response to hyperosmotic and heat shock by preventing the aggregation of stress-denatured proteins and by disaggregating proteins, also in an autonomous, DnaK-independent fashion. Unfolded proteins bind initially to DnaJ; upon interaction with the DnaJ-bound protein, DnaK hydrolyzes its bound ATP, resulting in the formation of a stable complex. GrpE releases ADP from DnaK; ATP binding to DnaK triggers the release of the substrate protein, thus completing the reaction cycle. Several rounds of ATP-dependent interactions between DnaJ, DnaK and GrpE are required for fully efficient folding. Also involved, together with DnaK and GrpE, in the DNA replication of plasmids through activation of initiation proteins. The chain is Chaperone protein DnaJ from Escherichia coli (strain K12 / MC4100 / BW2952).